We begin with the raw amino-acid sequence, 492 residues long: MHKLEDLKFINSYARLPEAFHDRPMPAPFPQPYRVAFNEKAAALIGLHPEEASRAEFVNAFTGQIPLTGMEPVSMIYAGHQFGVYVPQLGDGRALVLGEVQTPEGARWELQLKGSGPTRFSRGADGRAVLRSTIREYLASEAMHALGVPTTRALTILGSDMPVYRERVETAAILVRMAPSHVRFGSFEYFAHGGYPARLKELADYVIAHHYPELAERYQPYLALLETVIRRTADLIARWQAVGFAHGVMNTDNMSILGLTIDYGPYGFLDAYQPGFICNHSDHRGRYAFDQQPRIAWWNLACLAQALLPLLHEDEAAGVELARAALDRFNGQFASCWTALMGAKLGLLETRREDLDLIERLLGLMAGSAVDYTRFFRALGRFHDPAWLPDLRAAFRDPEAFDAWLADYRARLGHEGREDAARLADMLAVNPKYVLRNYLAQMAIAKAEQKDFSEVERLQRLLERPFDEQPEMEAYAALPPDWAEEIAVSCSS.

ATP-binding residues include Gly90, Gly92, Arg93, Lys113, Asp125, Gly126, Arg176, and Arg183. Catalysis depends on Asp252, which acts as the Proton acceptor. Residues Asn253 and Asp262 each contribute to the Mg(2+) site. Asp262 provides a ligand contact to ATP.

It belongs to the SELO family. Mg(2+) serves as cofactor. Mn(2+) is required as a cofactor.

It catalyses the reaction L-seryl-[protein] + ATP = 3-O-(5'-adenylyl)-L-seryl-[protein] + diphosphate. The enzyme catalyses L-threonyl-[protein] + ATP = 3-O-(5'-adenylyl)-L-threonyl-[protein] + diphosphate. It carries out the reaction L-tyrosyl-[protein] + ATP = O-(5'-adenylyl)-L-tyrosyl-[protein] + diphosphate. The catalysed reaction is L-histidyl-[protein] + UTP = N(tele)-(5'-uridylyl)-L-histidyl-[protein] + diphosphate. It catalyses the reaction L-seryl-[protein] + UTP = O-(5'-uridylyl)-L-seryl-[protein] + diphosphate. The enzyme catalyses L-tyrosyl-[protein] + UTP = O-(5'-uridylyl)-L-tyrosyl-[protein] + diphosphate. Functionally, nucleotidyltransferase involved in the post-translational modification of proteins. It can catalyze the addition of adenosine monophosphate (AMP) or uridine monophosphate (UMP) to a protein, resulting in modifications known as AMPylation and UMPylation. This is Protein nucleotidyltransferase YdiU from Thioalkalivibrio sulfidiphilus (strain HL-EbGR7).